Consider the following 502-residue polypeptide: Maturase K (502 aa).

Belongs to the intron maturase 2 family. MatK subfamily.

Its subcellular location is the plastid. The protein localises to the chloroplast. In terms of biological role, usually encoded in the trnK tRNA gene intron. Probably assists in splicing its own and other chloroplast group II introns. In Brassica campestris (Field mustard), this protein is Maturase K.